We begin with the raw amino-acid sequence, 363 residues long: Histidine biosynthesis bifunctional protein HisB (363 aa).

The interval 1 to 174 (MTQPTLFIDR…AVTNIGDRQP (174 aa)) is histidinol-phosphatase. Catalysis depends on Asp9, which acts as the Nucleophile. Residues Asp9 and Asp11 each contribute to the Mg(2+) site. Asp11 acts as the Proton donor in catalysis. 4 residues coordinate Zn(2+): Cys92, His94, Cys100, and Cys102. Asp129 contacts Mg(2+). The imidazoleglycerol-phosphate dehydratase stretch occupies residues 175–363 (RYAEVVRKTK…NELPSSKGVL (189 aa)).

It in the N-terminal section; belongs to the histidinol-phosphatase family. The protein in the C-terminal section; belongs to the imidazoleglycerol-phosphate dehydratase family. Mg(2+) is required as a cofactor. Zn(2+) serves as cofactor.

It is found in the cytoplasm. It catalyses the reaction D-erythro-1-(imidazol-4-yl)glycerol 3-phosphate = 3-(imidazol-4-yl)-2-oxopropyl phosphate + H2O. It carries out the reaction L-histidinol phosphate + H2O = L-histidinol + phosphate. It participates in amino-acid biosynthesis; L-histidine biosynthesis; L-histidine from 5-phospho-alpha-D-ribose 1-diphosphate: step 6/9. The protein operates within amino-acid biosynthesis; L-histidine biosynthesis; L-histidine from 5-phospho-alpha-D-ribose 1-diphosphate: step 8/9. The protein is Histidine biosynthesis bifunctional protein HisB of Actinobacillus pleuropneumoniae serotype 5b (strain L20).